The primary structure comprises 153 residues: Satratoxin biosynthesis SC2 cluster transcription factor SAT15 (153 aa).

It is found in the nucleus. Functionally, transcriptional regulator that may regulate the expression of the satratoxin biosynthesis SC2 cluster, one of the 3 clusters involved in the biosynthesis of satratoxins, trichothecene mycotoxins that are associated with human food poisonings. In Stachybotrys chartarum (strain CBS 109288 / IBT 7711) (Toxic black mold), this protein is Satratoxin biosynthesis SC2 cluster transcription factor SAT15.